We begin with the raw amino-acid sequence, 472 residues long: MSVAAKYYPNEPTEPKVVTSEIPGPESKAKVASLGEVFDSRPAYFVADYAKSSGNYIVDVDGNKFLDVYAQISSIALGYNNPALIEAAKSDKMIRALVDRPALGNFPGADLEDILKQLLKFAPKGQNKIWSGLSGADANELAFKAAFMYYRQLQRGGHGIDFSEEENSSVMENTSPGSPQLAVLSFKKAFHGRLFASGSSTCSKPIHKLDFPAFNWPHGEYPVYKYPLSENEEENKKEDDRCLAIVEDLIKSWPTPVAALIIEPIQSEGGDNHASKYFLQSLRDLTSKYNVVYIIDEVQTGVGATGKFWCHEWADIQPPVDLVTFSKKFQSAGYWFHDDRFIPNKAYRQFNTWCGDPARMIIAGAIGQEIVDNNLVDQCARVGDYLFEKLEKLQAKYPTRLINLRGKNRGTFIAFDLETSAERDQLLKLLKSNGCNVGGCAEKSVRLRPSLTFEEKHADIFVDALEKSIGQL.

135-136 contributes to the pyridoxal 5'-phosphate binding site; sequence GA. Arg-193 is a substrate binding site. Residue Lys-327 is modified to N6-(pyridoxal phosphate)lysine. Thr-352 contributes to the pyridoxal 5'-phosphate binding site.

This sequence belongs to the class-III pyridoxal-phosphate-dependent aminotransferase family. In terms of assembly, homodimer and homotetramer. Requires pyridoxal 5'-phosphate as cofactor.

Its subcellular location is the cytoplasm. It carries out the reaction 4-aminobutanoate + 2-oxoglutarate = succinate semialdehyde + L-glutamate. Its pathway is amino-acid degradation; L-arginine degradation. Required for the degradation of gamma-aminobutyric acid (GABA), which is important for utilization of GABA as nitrogen source and for oxidative stress tolerance. Deaminates GABA to succinate semialdehyde, which in turn is converted to succinate by the succinate-semialdehyde dehydrogenase UGA2. May be involved in an alternative, arginase-independent arginine degradation pathway via GABA. The polypeptide is 4-aminobutyrate aminotransferase (Kluyveromyces lactis (strain ATCC 8585 / CBS 2359 / DSM 70799 / NBRC 1267 / NRRL Y-1140 / WM37) (Yeast)).